Reading from the N-terminus, the 450-residue chain is Molybdate-anion transporter (450 aa).

12 helical membrane-spanning segments follow: residues M1–L21, L43–L63, I79–V99, F128–F148, A174–S194, W195–G215, V249–L269, G278–L298, P311–F331, F344–L364, G376–L396, and F409–V429.

Belongs to the major facilitator superfamily. Expressed ubiquitously but at relatively higher levels in the olfactory bulb and the skeletal muscle.

The protein localises to the cell membrane. In terms of biological role, mediates high-affinity intracellular uptake of the rare oligo-element molybdenum. This chain is Molybdate-anion transporter (MFSD5), found in Homo sapiens (Human).